The sequence spans 423 residues: Enolase (423 aa).

Gln-166 lines the (2R)-2-phosphoglycerate pocket. The active-site Proton donor is the Glu-208. Residues Asp-242, Glu-283, and Asp-310 each coordinate Mg(2+). (2R)-2-phosphoglycerate contacts are provided by Lys-335, Arg-364, Ser-365, and Lys-386. Lys-335 serves as the catalytic Proton acceptor.

This sequence belongs to the enolase family. It depends on Mg(2+) as a cofactor.

Its subcellular location is the cytoplasm. The protein resides in the secreted. It is found in the cell surface. The enzyme catalyses (2R)-2-phosphoglycerate = phosphoenolpyruvate + H2O. It participates in carbohydrate degradation; glycolysis; pyruvate from D-glyceraldehyde 3-phosphate: step 4/5. Its function is as follows. Catalyzes the reversible conversion of 2-phosphoglycerate (2-PG) into phosphoenolpyruvate (PEP). It is essential for the degradation of carbohydrates via glycolysis. In Elusimicrobium minutum (strain Pei191), this protein is Enolase.